A 209-amino-acid chain; its full sequence is Vacuolar protein sorting-associated protein 28 homolog (209 aa).

The VPS28 N-terminal domain maps to 1 to 105; sequence MSQNSNLMRE…REGRPITVKD (105 aa). In terms of domain architecture, VPS28 C-terminal spans 109-205; sequence NVLKHIASIV…AYQSFQKALN (97 aa).

The protein belongs to the VPS28 family. In terms of assembly, component of the ESCRT-I complex (endosomal sorting complex required for transport I).

It is found in the endosome. Its function is as follows. Component of the ESCRT-I complex, a regulator of vesicular trafficking process. The sequence is that of Vacuolar protein sorting-associated protein 28 homolog from Caenorhabditis briggsae.